Consider the following 164-residue polypeptide: Protein HIT1 (164 aa).

Positions 8, 11, 28, and 32 each coordinate Zn(2+). The segment at 8-49 (CGICRGVDGKYKCPKCGVRYCSLKCYKDAAKHVHKESEQPRA) adopts an HIT-type; degenerate zinc-finger fold.

The chain is Protein HIT1 (HIT1) from Saccharomyces cerevisiae (strain ATCC 204508 / S288c) (Baker's yeast).